The chain runs to 420 residues: Tyrosine--tRNA ligase (420 aa).

Tyrosine 36 contacts L-tyrosine. Positions 41–50 (PTADSLHIGH) match the 'HIGH' region motif. L-tyrosine is bound by residues tyrosine 170 and glutamine 174. Residues 231 to 235 (KFGKT) carry the 'KMSKS' region motif. Residue lysine 234 coordinates ATP. Residues 353–420 (RNIVEVIVET…KKKYFMVNYK (68 aa)) enclose the S4 RNA-binding domain.

The protein belongs to the class-I aminoacyl-tRNA synthetase family. TyrS type 1 subfamily. As to quaternary structure, homodimer.

Its subcellular location is the cytoplasm. It catalyses the reaction tRNA(Tyr) + L-tyrosine + ATP = L-tyrosyl-tRNA(Tyr) + AMP + diphosphate + H(+). In terms of biological role, catalyzes the attachment of tyrosine to tRNA(Tyr) in a two-step reaction: tyrosine is first activated by ATP to form Tyr-AMP and then transferred to the acceptor end of tRNA(Tyr). This chain is Tyrosine--tRNA ligase, found in Staphylococcus saprophyticus subsp. saprophyticus (strain ATCC 15305 / DSM 20229 / NCIMB 8711 / NCTC 7292 / S-41).